The primary structure comprises 600 residues: Elongation factor 4 (600 aa).

The region spanning 3–185 (KYIRNFSIIA…CLIHDIPHPQ (183 aa)) is the tr-type G domain. GTP-binding positions include 15–20 (DHGKST) and 132–135 (NKID).

The protein belongs to the TRAFAC class translation factor GTPase superfamily. Classic translation factor GTPase family. LepA subfamily.

The protein resides in the cell inner membrane. The catalysed reaction is GTP + H2O = GDP + phosphate + H(+). Functionally, required for accurate and efficient protein synthesis under certain stress conditions. May act as a fidelity factor of the translation reaction, by catalyzing a one-codon backward translocation of tRNAs on improperly translocated ribosomes. Back-translocation proceeds from a post-translocation (POST) complex to a pre-translocation (PRE) complex, thus giving elongation factor G a second chance to translocate the tRNAs correctly. Binds to ribosomes in a GTP-dependent manner. The sequence is that of Elongation factor 4 from Blochmanniella pennsylvanica (strain BPEN).